A 1381-amino-acid polypeptide reads, in one-letter code: Contactin-associated protein 1 (1381 aa).

The first 20 residues, 1–20 (MMSLRLFSILLAAVVSGAQG), serve as a signal peptide directing secretion. Residues 21–1284 (WGYYGCNEEL…PYYHDDGWIA (1264 aa)) are Extracellular-facing. In terms of domain architecture, F5/8 type C spans 26 to 169 (CNEELVGPLY…IGLRLGIYGC (144 aa)). Cysteine 26 and cysteine 169 are oxidised to a cystine. N-linked (GlcNAc...) asparagine glycosylation is found at asparagine 121, asparagine 129, and asparagine 277. 2 consecutive Laminin G-like domains span residues 204–356 (FKTE…AFRC) and 390–539 (FRTW…FDTC). A disulfide bridge connects residues cysteine 324 and cysteine 356. N-linked (GlcNAc...) asparagine glycosylation is found at asparagine 421, asparagine 500, and asparagine 519. 4 cysteine pairs are disulfide-bonded: cysteine 507–cysteine 539, cysteine 545–cysteine 556, cysteine 550–cysteine 565, and cysteine 567–cysteine 577. In terms of domain architecture, EGF-like 1 spans 544-576 (RCSPNMCEHDGRCYQSWDDFICYCELTGYKGVT). The region spanning 577–796 (CHEPLYKESC…NTISFRTGAA (220 aa)) is the Fibrinogen C-terminal domain. Residues asparagine 598, asparagine 654, asparagine 665, asparagine 764, asparagine 805, asparagine 844, asparagine 861, asparagine 949, and asparagine 957 are each glycosylated (N-linked (GlcNAc...) asparagine). Residues 814 to 958 (FRTSAPSGVF…NASEGTFPNC (145 aa)) form the Laminin G-like 3 domain. Intrachain disulfides connect cysteine 931/cysteine 958, cysteine 962/cysteine 975, cysteine 969/cysteine 984, and cysteine 986/cysteine 996. Residues 962–996 (CTHPRFPCFHGGRCVERYSYYTCDCDLTAFDGPYC) enclose the EGF-like 2 domain. Asparagine 1079 and asparagine 1148 each carry an N-linked (GlcNAc...) asparagine glycan. The Laminin G-like 4 domain occupies 1089 to 1251 (FSTSSAPAVL…VQGELSESNC (163 aa)). Cysteine 1210 and cysteine 1251 are joined by a disulfide. The helical transmembrane segment at 1285 to 1305 (ILLGFLVAFLLLGLVGMLVLF) threads the bilayer. Residues 1306–1381 (YLQNHRYKGS…PQILEESRSE (76 aa)) are Cytoplasmic-facing. The disordered stretch occupies residues 1317 to 1381 (HTNEPKATHD…PQILEESRSE (65 aa)). Residues 1319-1329 (NEPKATHDSHP) are compositionally biased toward basic and acidic residues. The SH3-binding signature appears at 1329–1366 (PGGKAPLPPSGPAQAPAPTPAPTQVPTPAPAPASGPGP). Pro residues predominate over residues 1334 to 1363 (PLPPSGPAQAPAPTPAPTQVPTPAPAPASG). A Phosphoserine modification is found at serine 1380.

This sequence belongs to the neurexin family. As to quaternary structure, interacts with CNTN1/contactin in cis form. Predominantly expressed in brain. In myelinated nerve fibers of the CNS predominantly found in paranodal axoglial junctions. In unmyelinated nerve fibers of the CNS diffusely distributed along the entire surface. Weak expression is detected in ovary, pancreas, colon, lung, heart, intestine and testis.

It is found in the membrane. Its subcellular location is the cell junction. It localises to the paranodal septate junction. Functionally, required, with CNTNAP2, for radial and longitudinal organization of myelinated axons. Plays a role in the formation of functional distinct domains critical for saltatory conduction of nerve impulses in myelinated nerve fibers. Demarcates the paranodal region of the axo-glial junction. In association with contactin involved in the signaling between axons and myelinating glial cells. This is Contactin-associated protein 1 (Cntnap1) from Rattus norvegicus (Rat).